The chain runs to 349 residues: Protein RecA (349 aa).

65–72 (GPESSGKT) serves as a coordination point for ATP. The interval 329-349 (KASDQTAAHDETEEEPDLLES) is disordered. The span at 339 to 349 (ETEEEPDLLES) shows a compositional bias: acidic residues.

It belongs to the RecA family.

The protein localises to the cytoplasm. Can catalyze the hydrolysis of ATP in the presence of single-stranded DNA, the ATP-dependent uptake of single-stranded DNA by duplex DNA, and the ATP-dependent hybridization of homologous single-stranded DNAs. It interacts with LexA causing its activation and leading to its autocatalytic cleavage. This is Protein RecA from Acinetobacter baylyi (strain ATCC 33305 / BD413 / ADP1).